A 146-amino-acid polypeptide reads, in one-letter code: Cytidine deaminase (146 aa).

Positions 13–140 (ECVQQLLVCS…ELLPSSFGPE (128 aa)) constitute a CMP/dCMP-type deaminase domain. Substrate is bound at residue 54–60 (NIENACY). Cys65 contributes to the Zn(2+) binding site. Glu67 functions as the Proton donor in the catalytic mechanism. Positions 99 and 102 each coordinate Zn(2+).

This sequence belongs to the cytidine and deoxycytidylate deaminase family. As to quaternary structure, homotetramer. Zn(2+) serves as cofactor. As to expression, highly expressed in granulocytes while expression is very low in fibroblasts, chondrocytes, monocytes, and T- as well as B-cell lines.

It catalyses the reaction cytidine + H2O + H(+) = uridine + NH4(+). It carries out the reaction 2'-deoxycytidine + H2O + H(+) = 2'-deoxyuridine + NH4(+). This enzyme scavenges exogenous and endogenous cytidine and 2'-deoxycytidine for UMP synthesis. The polypeptide is Cytidine deaminase (Homo sapiens (Human)).